The chain runs to 397 residues: Guanine nucleotide-binding protein G(s) subunit alpha (397 aa).

The tract at residues 1 to 23 is disordered; sequence MGCLGNSKTEDQRNEEKAQREAN. Gly2 is lipidated: N-palmitoyl glycine. Cys3 carries the S-palmitoyl cysteine lipid modification. Positions 8-23 are enriched in basic and acidic residues; that stretch reads KTEDQRNEEKAQREAN. The G-alpha domain occupies 39–397; sequence ATHRLLLLGA…RMHLRQYELL (359 aa). The interval 42–55 is G1 motif; the sequence is RLLLLGAGESGKST. Residues 47 to 55, 182 to 189, 208 to 212, 277 to 280, and Ala369 each bind GTP; these read GAGESGKST, LLRCRVLT, DVGGQ, and NKQD. The Mg(2+) site is built by Ser54 and Thr189. The tract at residues 181–189 is G2 motif; sequence DLLRCRVLT. The G3 motif stretch occupies residues 204–213; it reads FHMFDVGGQR. The interval 273–280 is G4 motif; sequence ILFLNKQD. Positions 367 to 372 are G5 motif; that stretch reads TCAVDT.

The protein belongs to the G-alpha family. G(s) subfamily. Heterotrimeric G proteins are composed of 3 units; alpha, beta and gamma. The alpha chain contains the guanine nucleotide binding site. Interacts with CRY1; the interaction may block GPCR-mediated regulation of cAMP concentrations. Interacts with ADCY6 and stimulates its adenylyl cyclase activity. Interacts with ADCY2 and ADCY5. Stimulates the ADCY5 adenylyl cyclase activity. Interaction with SASH1.

Its subcellular location is the cell membrane. Guanine nucleotide-binding proteins (G proteins) function as transducers in numerous signaling pathways controlled by G protein-coupled receptors (GPCRs). Signaling involves the activation of adenylyl cyclases, resulting in increased levels of the signaling molecule cAMP. GNAS functions downstream of several GPCRs, including beta-adrenergic receptors. Stimulates the Ras signaling pathway via RAPGEF2. This is Guanine nucleotide-binding protein G(s) subunit alpha (GNAS) from Sus scrofa (Pig).